Reading from the N-terminus, the 236-residue chain is MSDLTDAPQANTDTLTTSAPDKLSGFEWWRRSLQYRTGMGISEDEKKQFEHDYRAKSLPKQCTDCVANLDWMLNYSPSVIFMMDHVKKIGGNISKSNIICDVCDDYKGGGFHPEGGILLCSNWITDKWQLEDILTHELVHAYDFLKFKVDLTNLKHHACTEIRASMLSGECRIFNEIKKTGLGDFGKKFQSCIKRRAILSVSANPNCKDTQEAEKVVNTVWQSCFNDTRPFERVYR.

A divalent metal cation is bound at residue H136. Residue E137 is part of the active site. Residue H140 coordinates a divalent metal cation.

Belongs to the peptidase M76 family.

Its subcellular location is the mitochondrion inner membrane. In terms of biological role, has a dual role in the assembly of mitochondrial ATPase. Acts as a protease that removes N-terminal residues of mitochondrial ATPase CF(0) subunit 6 at the intermembrane space side. Also involved in the correct assembly of the membrane-embedded ATPase CF(0) particle, probably mediating association of subunit 6 with the subunit 9 ring. The protein is Mitochondrial inner membrane protease ATP23 (ATP23) of Debaryomyces hansenii (strain ATCC 36239 / CBS 767 / BCRC 21394 / JCM 1990 / NBRC 0083 / IGC 2968) (Yeast).